A 631-amino-acid polypeptide reads, in one-letter code: UvrABC system protein C (631 aa).

Residues 26 to 105 (SSPGVYQFKN…IKELKPRYNV (80 aa)) enclose the GIY-YIG domain. The 36-residue stretch at 219–254 (SATIRSLNERMLSFAKELKFEQAAELKTQIDSLKRY) folds into the UVR domain.

This sequence belongs to the UvrC family. As to quaternary structure, interacts with UvrB in an incision complex.

It is found in the cytoplasm. In terms of biological role, the UvrABC repair system catalyzes the recognition and processing of DNA lesions. UvrC both incises the 5' and 3' sides of the lesion. The N-terminal half is responsible for the 3' incision and the C-terminal half is responsible for the 5' incision. This Chlorobium phaeobacteroides (strain DSM 266 / SMG 266 / 2430) protein is UvrABC system protein C.